Reading from the N-terminus, the 586-residue chain is A-type ATP synthase subunit A (586 aa).

Position 232-239 (232-239) interacts with ATP; sequence GPFGSGKT.

This sequence belongs to the ATPase alpha/beta chains family. In terms of assembly, has multiple subunits with at least A(3), B(3), C, D, E, F, H, I and proteolipid K(x).

The protein resides in the cell membrane. The catalysed reaction is ATP + H2O + 4 H(+)(in) = ADP + phosphate + 5 H(+)(out). Functionally, component of the A-type ATP synthase that produces ATP from ADP in the presence of a proton gradient across the membrane. The A chain is the catalytic subunit. This is A-type ATP synthase subunit A from Methanococcus maripaludis (strain DSM 14266 / JCM 13030 / NBRC 101832 / S2 / LL).